An 85-amino-acid polypeptide reads, in one-letter code: MEESSEPQLDAKSKVTSQLIDFEWKLGMAVSSDSCRSLKYPYVAVMLKVADHSGQVKNKSFEMTIPQFQNFYRQFKEIAAIIETV.

An N-acetylmethionine modification is found at Met1. The COMM domain maps to 18–85; sequence QLIDFEWKLG…KEIAAIIETV (68 aa).

This sequence belongs to the COMM domain-containing protein 6 family. Component of the commander complex consisting of the CCC subcomplex and the retriever subcomplex. Component of the CCC (COMMD/CCDC22/CCDC93) subcomplex consisting of COMMD1, COMMD2, COMMD3, COMMD4, COMMD5, COMMD6, COMMD7, COMMD8, COMMD9, COMMD10, CCDC22 and CCDC93; within the complex forms a heterodimer with COMMD1. May form a homodimer with isoform 1. Interacts with RELA, RELB, NFKB1/p105. Does not interact with NFKBIB. Interacts with CCDC22, CCDC93, SCNN1B, CUL4A.

It is found in the nucleus. The protein localises to the cytoplasm. Functionally, scaffold protein in the commander complex that is essential for endosomal recycling of transmembrane cargos; the commander complex is composed of the CCC subcomplex and the retriever subcomplex. May modulate activity of cullin-RING E3 ubiquitin ligase (CRL) complexes. Down-regulates activation of NF-kappa-B. Inhibits TNF-induced NFKB1 activation. In Bos taurus (Bovine), this protein is COMM domain-containing protein 6 (COMMD6).